The following is a 123-amino-acid chain: Small ribosomal subunit protein uS12 (123 aa).

Positions 1–24 are disordered; that stretch reads MPTINQLIRKERKKQVKKSKSPAL. Over residues 10-20 the composition is skewed to basic residues; the sequence is KERKKQVKKSK. A 3-methylthioaspartic acid modification is found at Asp89.

This sequence belongs to the universal ribosomal protein uS12 family. In terms of assembly, part of the 30S ribosomal subunit. Contacts proteins S8 and S17. May interact with IF1 in the 30S initiation complex.

Its function is as follows. With S4 and S5 plays an important role in translational accuracy. Functionally, interacts with and stabilizes bases of the 16S rRNA that are involved in tRNA selection in the A site and with the mRNA backbone. Located at the interface of the 30S and 50S subunits, it traverses the body of the 30S subunit contacting proteins on the other side and probably holding the rRNA structure together. The combined cluster of proteins S8, S12 and S17 appears to hold together the shoulder and platform of the 30S subunit. The sequence is that of Small ribosomal subunit protein uS12 from Sulfurovum sp. (strain NBC37-1).